The chain runs to 79 residues: Putative defensin-like protein 146 (79 aa).

The N-terminal stretch at 1–25 (MMKNQFQLSLIILTFFILLELGVMG) is a signal peptide. Intrachain disulfides connect C35–C78, C46–C66, C51–C72, and C55–C74.

It belongs to the DEFL family.

It is found in the secreted. The sequence is that of Putative defensin-like protein 146 (LCR9) from Arabidopsis thaliana (Mouse-ear cress).